Consider the following 52-residue polypeptide: Ovomucoid (52 aa).

The region spanning 2 to 52 (VDCSDYPKPVCTLEEMPLCGSDNKTYGNKCNFCNAVVDSNGTLTLSHFGKC) is the Kazal-like domain. 3 disulfides stabilise this stretch: cysteine 4–cysteine 34, cysteine 12–cysteine 31, and cysteine 20–cysteine 52. N-linked (GlcNAc...) asparagine glycosylation is present at asparagine 41.

It is found in the secreted. The sequence is that of Ovomucoid from Scythrops novaehollandiae (Channel-billed cuckoo).